The sequence spans 956 residues: Calsyntenin-3 (956 aa).

The first 19 residues, 1–19, serve as a signal peptide directing secretion; sequence MTLLLLPLLLASLLASCSC. Topologically, residues 1-30 are cytoplasmic; the sequence is MTLLLLPLLLASLLASCSCNKANKHKPWIE. Topologically, residues 20–847 are extracellular; the sequence is NKANKHKPWI…SHRNSMIPSA (828 aa). 2 consecutive Cadherin domains span residues 29-145 and 146-246; these read IEAE…APVF and VERL…KPSW. The segment at residues 31–51 is an intramembrane region (helical); that stretch reads AEYQGIVMENDNTVLLNPPLF. The Cytoplasmic segment spans residues 52 to 71; the sequence is ALDKDAPLRYAGEICGFRLH. The segment at residues 72 to 94 is an intramembrane region (helical); the sequence is GSGVPFEAVILDKATGEGLIRAK. At 95–151 the chain is on the cytoplasmic side; that stretch reads EPVDCEAQKEHTFTIQAYDCGEGPDGANTKKSHKATVHVRVNDVNEFAPVFVERLYR. The segment at residues 152-172 is an intramembrane region (helical); sequence AAVTEGKLYDRILRVEAIDGD. Over 173–255 the chain is Cytoplasmic; sequence CSPQYSQICY…WQGWNKRIEY (83 aa). A helical membrane pass occupies residues 256 to 276; the sequence is APGAGSLALFPGIRLETCDEP. The Lumenal portion of the chain corresponds to 277–364; it reads LWNIQATIEL…PLGGPSGLGS (88 aa). N-linked (GlcNAc...) asparagine glycans are attached at residues Asn299, Asn327, Asn347, Asn507, and Asn740. Residues 848 to 868 form a helical membrane-spanning segment; the sequence is ATLIIVVCVGFLVLMVVLGLV. At 869-956 the chain is on the cytoplasmic side; sequence RIHSLHRRVS…RIIETPPHRY (88 aa). The interval 916–956 is disordered; that stretch reads QSCVTGAVGGQQEDEDSSDSEVADSPSSDERRIIETPPHRY. Over residues 927-937 the composition is skewed to acidic residues; that stretch reads QEDEDSSDSEV. Basic and acidic residues predominate over residues 943-956; sequence SDERRIIETPPHRY.

The protein belongs to the calsyntenin family. In terms of assembly, interacts (via cadherin domains) with both alpha and beta isoforms of neurexins (NRXN1, NRXN2 and NRXN3). Directly interacts with APBA2. Forms a tripartite complex with APBA2 and APP. Interacts with low affinity with KLC1. Interacts with SLC23A2/SVCT2. As to quaternary structure, interacts with CIDEA; inhibiting the lipid transferase activity of CIDEA. Interacts with CIDEC; inhibiting the lipid transferase activity of CIDEC. Proteolytically processed under normal cellular conditions. A primary zeta-cleavage generates a large extracellular (soluble) N-terminal domain (sAlc) and a short C-terminal transmembrane fragment (CTF1). A secondary cleavage catalyzed by gamma-secretase within the transmembrane domain releases the beta-Alc-beta chain in the extracellular milieu and produces an intracellular fragment (AlcICD). This processing is strongly suppressed in the tripartite complex formed with APBA2 and APP, which seems to prevent the association with gamma-secretase. In terms of processing, ubiquitinated: endoplasmic reticulum-localized protein is ubiquitinated and degraded by the endoplasmic reticulum-associated degradation (ERAD) pathway. As to expression, according to PubMed:12498782, expressed predominantly in the brain and in kidney. Low levels in heart, skeletal muscle, liver, placenta, pancreas and lung. According to PubMed:12972431, predominant expression in brain, and only marginal in kidney. In brain, present throughout all cortical layers, highest levels in GABAergic neurons (based on morphology and distribution pattern). Expression is restricted to adipose tissue, with high expression in multilocular thermogenic adipocytes (brown adipose tissue).

The protein localises to the postsynaptic cell membrane. It localises to the endoplasmic reticulum membrane. It is found in the golgi apparatus membrane. Its subcellular location is the cell projection. The protein resides in the dendrite. The protein localises to the lipid droplet. In terms of biological role, postsynaptic adhesion molecule that binds to presynaptic neurexins to mediate both excitatory and inhibitory synapse formation. Promotes synapse development by acting as a cell adhesion molecule at the postsynaptic membrane, which associates with both neurexin-alpha and neurexin-beta proteins at the presynaptic membrane. Regulates the balance between excitatory and inhibitory synapses by inhibiting formation of excitatory parallel-fiber synapses and promoting formation of inhibitory synapses in the same neuron. May also be involved in ascorbate (vitamin C) uptake via its interaction with SLC23A2/SVCT2. Complex formation with APBA2 and APP, stabilizes APP metabolism and enhances APBA2-mediated suppression of beta-APP40 secretion, due to the retardation of intracellular APP maturation. Its function is as follows. Adipose-specific isoform that plays a key role in adaptive thermogenesis. Facilitates the efficient use of stored triglyceride by promoting multilocular morphology of thermogenic adipocytes: acts by inhibiting the activity of CIDEA and CIDEC on lipid droplets, thereby preventing lipid droplet fusion and facilitating lipid utilization. May also participate in adaptive thermogenesis by promoting sympathetic innervation of thermogenic adipose tissue: acts by driving secretion of neurotrophic factor S100B from brown adipocytes, stimulating neurite outgrowth from sympathetic neurons. The sequence is that of Calsyntenin-3 from Homo sapiens (Human).